The following is a 225-amino-acid chain: Urease accessory protein UreE (225 aa).

Basic and acidic residues-rich tracts occupy residues 189 to 202 and 212 to 225; these read HSHD…EHEG and NSHD…HSRR. Residues 189-225 form a disordered region; it reads HSHDFMGHSHEHEGHRHVHNHAGNSHDNEHDEHHSRR.

The protein belongs to the UreE family.

It is found in the cytoplasm. In terms of biological role, involved in urease metallocenter assembly. Binds nickel. Probably functions as a nickel donor during metallocenter assembly. The protein is Urease accessory protein UreE of Edwardsiella ictaluri.